The primary structure comprises 72 residues: Translation initiation factor IF-1 (72 aa).

Residues 1–72 (MAKSDVIEME…SKGRIVYRAR (72 aa)) enclose the S1-like domain.

It belongs to the IF-1 family. Component of the 30S ribosomal translation pre-initiation complex which assembles on the 30S ribosome in the order IF-2 and IF-3, IF-1 and N-formylmethionyl-tRNA(fMet); mRNA recruitment can occur at any time during PIC assembly.

It is found in the cytoplasm. Functionally, one of the essential components for the initiation of protein synthesis. Stabilizes the binding of IF-2 and IF-3 on the 30S subunit to which N-formylmethionyl-tRNA(fMet) subsequently binds. Helps modulate mRNA selection, yielding the 30S pre-initiation complex (PIC). Upon addition of the 50S ribosomal subunit IF-1, IF-2 and IF-3 are released leaving the mature 70S translation initiation complex. This chain is Translation initiation factor IF-1, found in Marinobacter nauticus (strain ATCC 700491 / DSM 11845 / VT8) (Marinobacter aquaeolei).